The following is a 792-amino-acid chain: LPS-assembly protein LptD (792 aa).

Residues 1 to 22 (MYRVLRLLPLPLSVAISLSALA) form the signal peptide.

Belongs to the LptD family. In terms of assembly, component of the lipopolysaccharide transport and assembly complex. Interacts with LptE and LptA.

It localises to the cell outer membrane. Its function is as follows. Together with LptE, is involved in the assembly of lipopolysaccharide (LPS) at the surface of the outer membrane. This chain is LPS-assembly protein LptD, found in Xylella fastidiosa (strain Temecula1 / ATCC 700964).